The sequence spans 118 residues: Large ribosomal subunit protein bL20 (118 aa).

This sequence belongs to the bacterial ribosomal protein bL20 family.

Binds directly to 23S ribosomal RNA and is necessary for the in vitro assembly process of the 50S ribosomal subunit. It is not involved in the protein synthesizing functions of that subunit. In Buchnera aphidicola subsp. Acyrthosiphon pisum (strain APS) (Acyrthosiphon pisum symbiotic bacterium), this protein is Large ribosomal subunit protein bL20 (rplT).